A 453-amino-acid polypeptide reads, in one-letter code: Glutamyl-tRNA reductase (453 aa).

Residues 52–55, S105, 110–112, and Q116 contribute to the substrate site; these read TCNR and EDQ. C53 functions as the Nucleophile in the catalytic mechanism. NADP(+) is bound at residue 184-189; that stretch reads GAGEMA. Low complexity predominate over residues 413–424; that stretch reads PGLEPEPTELPT. The interval 413–453 is disordered; it reads PGLEPEPTELPTVPDGPEGVPEELRERMSSGMLEQFSTNDD.

Belongs to the glutamyl-tRNA reductase family. Homodimer.

It carries out the reaction (S)-4-amino-5-oxopentanoate + tRNA(Glu) + NADP(+) = L-glutamyl-tRNA(Glu) + NADPH + H(+). The protein operates within porphyrin-containing compound metabolism; protoporphyrin-IX biosynthesis; 5-aminolevulinate from L-glutamyl-tRNA(Glu): step 1/2. Functionally, catalyzes the NADPH-dependent reduction of glutamyl-tRNA(Glu) to glutamate 1-semialdehyde (GSA). The sequence is that of Glutamyl-tRNA reductase from Natronomonas pharaonis (strain ATCC 35678 / DSM 2160 / CIP 103997 / JCM 8858 / NBRC 14720 / NCIMB 2260 / Gabara) (Halobacterium pharaonis).